The chain runs to 738 residues: Alcohol dehydrogenase (quinone), dehydrogenase subunit (738 aa).

Residues 1 to 35 (MISAVFGKRRSLSRTLTAGTICAALISGYATMASA) form the signal peptide. Glu-97 is a pyrroloquinoline quinone binding site. Cys-143 and Cys-144 form a disulfide bridge. Arg-149 serves as a coordination point for pyrroloquinoline quinone. Position 217 (Glu-217) interacts with Ca(2+). Residue Thr-278 coordinates pyrroloquinoline quinone. Asn-298 and Asp-343 together coordinate Ca(2+). Catalysis depends on Asp-343, which acts as the Proton acceptor. Residues Lys-370 and Ile-584 each contribute to the pyrroloquinoline quinone site. The Cytochrome c domain occupies 634-738 (FDSKRTDNGY…NADGIPEQLP (105 aa)). The heme c site is built by Cys-650, Cys-653, His-654, and Met-693.

Belongs to the bacterial PQQ dehydrogenase family. The alcohol dehydrogenase multicomponent enzyme system is composed of a dehydrogenase subunit I (AdhA) and a cytochrome c subunit II (AdhB). It depends on pyrroloquinoline quinone as a cofactor. Ca(2+) is required as a cofactor. Heme c serves as cofactor.

It is found in the cell membrane. It carries out the reaction ethanol + a ubiquinone = a ubiquinol + acetaldehyde. Its function is as follows. Dehydrogenase component of the alcohol dehydrogenase multicomponent enzyme system which is involved in the production of acetic acid and in the ethanol oxidase respiratory chain. Quinohemoprotein alcohol dehydrogenase (ADH) catalyzes the oxidation of ethanol to acetaldehyde by transferring electrons to the ubiquinone embedded in the membrane phospholipids. The electrons transfer from ethanol to membranous ubiquinone occurs from pyrroloquinoline quinone (PQQ) to one heme c in subunit I (AdhA), and finally to two heme c in subunit II (AdhB). Besides ubiquinone reduction, ADH also has a ubiquinol (QH2) oxidation reaction which mediates electron transfer from ubiquinol to the non-energy generating bypass oxidase system. The electrons transfer occurs from ubiquinol (QH2) to the additional heme c within subunit II (AdhB). In Gluconacetobacter polyoxogenes (Acetobacter polyoxogenes), this protein is Alcohol dehydrogenase (quinone), dehydrogenase subunit (adhA).